Reading from the N-terminus, the 198-residue chain is Holliday junction resolvase RecU (198 aa).

The disordered stretch occupies residues 1-21; it reads MVNYPHKLSSQKRQPSLSQPK. Over residues 11-21 the composition is skewed to polar residues; that stretch reads QKRQPSLSQPK. Mg(2+) is bound by residues threonine 81, aspartate 83, glutamate 96, and glutamine 115.

The protein belongs to the RecU family. Mg(2+) is required as a cofactor.

Its subcellular location is the cytoplasm. The enzyme catalyses Endonucleolytic cleavage at a junction such as a reciprocal single-stranded crossover between two homologous DNA duplexes (Holliday junction).. Its function is as follows. Endonuclease that resolves Holliday junction intermediates in genetic recombination. Cleaves mobile four-strand junctions by introducing symmetrical nicks in paired strands. Promotes annealing of linear ssDNA with homologous dsDNA. Required for DNA repair, homologous recombination and chromosome segregation. This chain is Holliday junction resolvase RecU, found in Streptococcus pneumoniae (strain Taiwan19F-14).